We begin with the raw amino-acid sequence, 365 residues long: tRNA(Met) cytidine acetate ligase (365 aa).

ATP contacts are provided by residues 7-20 (IAEFNPFHNGHKYL), Gly-96, Asn-152, and Arg-175.

It belongs to the TmcAL family.

It is found in the cytoplasm. It catalyses the reaction cytidine(34) in elongator tRNA(Met) + acetate + ATP = N(4)-acetylcytidine(34) in elongator tRNA(Met) + AMP + diphosphate. Its function is as follows. Catalyzes the formation of N(4)-acetylcytidine (ac(4)C) at the wobble position of elongator tRNA(Met), using acetate and ATP as substrates. First activates an acetate ion to form acetyladenylate (Ac-AMP) and then transfers the acetyl group to tRNA to form ac(4)C34. The sequence is that of tRNA(Met) cytidine acetate ligase from Streptococcus pneumoniae (strain JJA).